The following is a 728-amino-acid chain: Bacteriophytochrome (728 aa).

A tetrapyrrole is bound at residue Cys12. The interval 17–495 (IHVPGAIQPH…RLDLMELCLN (479 aa)) is chromophore binding domain. In terms of domain architecture, GAF spans 139–303 (DTASLLSNVT…IFSQVCSAIV (165 aa)). Positions 510–721 (VLGHDLRNPL…TFCLRLPVRQ (212 aa)) constitute a Histidine kinase domain. His513 carries the phosphohistidine; by autocatalysis modification.

The protein in the N-terminal section; belongs to the phytochrome family. Contains one covalently linked tetrapyrrole chromophore.

It carries out the reaction ATP + protein L-histidine = ADP + protein N-phospho-L-histidine.. In terms of biological role, photoreceptor which exists in two forms that are reversibly interconvertible by light: the R form that absorbs maximally in the red region of the spectrum and the FR form that absorbs maximally in the far-red region. This Pseudomonas aeruginosa (strain ATCC 15692 / DSM 22644 / CIP 104116 / JCM 14847 / LMG 12228 / 1C / PRS 101 / PAO1) protein is Bacteriophytochrome (bphP).